Consider the following 704-residue polypeptide: Elongation factor G (704 aa).

In terms of domain architecture, tr-type G spans 8 to 291 (DKVRNIGIMA…AVVDYLASPL (284 aa)). Residues 17 to 24 (AHIDAGKT), 90 to 94 (DTPGH), and 144 to 147 (NKMD) contribute to the GTP site.

This sequence belongs to the TRAFAC class translation factor GTPase superfamily. Classic translation factor GTPase family. EF-G/EF-2 subfamily.

The protein resides in the cytoplasm. Its function is as follows. Catalyzes the GTP-dependent ribosomal translocation step during translation elongation. During this step, the ribosome changes from the pre-translocational (PRE) to the post-translocational (POST) state as the newly formed A-site-bound peptidyl-tRNA and P-site-bound deacylated tRNA move to the P and E sites, respectively. Catalyzes the coordinated movement of the two tRNA molecules, the mRNA and conformational changes in the ribosome. This is Elongation factor G from Chlorobium luteolum (strain DSM 273 / BCRC 81028 / 2530) (Pelodictyon luteolum).